The primary structure comprises 205 residues: Peptidyl-prolyl cis-trans isomerase B (205 aa).

The N-terminal stretch at 1–20 (MKFSGLWCWLLLFLSVNVIA) is a signal peptide. Positions 39-198 (FFDIEHGEEK…EAVKIAKCGE (160 aa)) constitute a PPIase cyclophilin-type domain.

This sequence belongs to the cyclophilin-type PPIase family. PPIase B subfamily.

The protein localises to the secreted. It catalyses the reaction [protein]-peptidylproline (omega=180) = [protein]-peptidylproline (omega=0). With respect to regulation, cyclosporin A (CsA) inhibits CYPB. Functionally, PPIases accelerate the folding of proteins. It catalyzes the cis-trans isomerization of proline imidic peptide bonds in oligopeptides. The polypeptide is Peptidyl-prolyl cis-trans isomerase B (CPR2) (Saccharomyces cerevisiae (strain ATCC 204508 / S288c) (Baker's yeast)).